The primary structure comprises 434 residues: Trigger factor (434 aa).

Residues 161 to 246 enclose the PPIase FKBP-type domain; it reads EDRATLDFTG…LKKVEVRELP (86 aa).

This sequence belongs to the FKBP-type PPIase family. Tig subfamily.

The protein localises to the cytoplasm. The catalysed reaction is [protein]-peptidylproline (omega=180) = [protein]-peptidylproline (omega=0). Functionally, involved in protein export. Acts as a chaperone by maintaining the newly synthesized protein in an open conformation. Functions as a peptidyl-prolyl cis-trans isomerase. In Yersinia enterocolitica serotype O:8 / biotype 1B (strain NCTC 13174 / 8081), this protein is Trigger factor.